The chain runs to 594 residues: Alanine--tRNA ligase (594 aa).

Positions 456, 460, 558, and 562 each coordinate Zn(2+).

Belongs to the class-II aminoacyl-tRNA synthetase family. Zn(2+) is required as a cofactor.

It is found in the cytoplasm. The enzyme catalyses tRNA(Ala) + L-alanine + ATP = L-alanyl-tRNA(Ala) + AMP + diphosphate. In terms of biological role, catalyzes the attachment of alanine to tRNA(Ala) in a two-step reaction: alanine is first activated by ATP to form Ala-AMP and then transferred to the acceptor end of tRNA(Ala). Also edits incorrectly charged Ser-tRNA(Ala) and Gly-tRNA(Ala) via its editing domain. This chain is Alanine--tRNA ligase (alaS), found in Borreliella burgdorferi (strain ATCC 35210 / DSM 4680 / CIP 102532 / B31) (Borrelia burgdorferi).